Reading from the N-terminus, the 557-residue chain is MSEVPEELKIKQKFPNWYDWLKPITQKDIKHGFASYIALPKQVNSEFFKMPFGDVERDVFSEDWKLPENWKEIILDSFKETLEKNRAFKVFMDICVRCGACADKCHYYIGTGDPKNMPVMRAETVRSVYRYYFTIGGKLFGKWAGARPLDENVIKEWYYYLLQCSLCRRCSLFCPYGIDTAEVVWWARRMLSRVGLNQRFMCISIEASARTGNHLGLYAGGMAGSIEQGLSELKDITGFDLHTYINKPGADVLFVAPSADYFATPHWYAMLGYLLLFNELEERYGLTVTWSTYASEGGNFGTFHSYEAAQLLNSKIYKEAERLGVKFIIGGECGHMWRDKHQFINTMNNPPKHAEWKKFWDDPDLGQISEKLKGINLGEFISGEHGWIHVLEFVAALIKHKKIDIDPSRNDHWRATYHDPCNVARGMGMLEEPRYVLRNVMNNFYDMPEHTIREKTYCCAAGGGMLAEELMELRMRGVMPRMMALRYVVKKYGVNIMLTPCAIDKAQFPIAVDYWKIPVEIGGPMEMVGNALVLTAFGEKPEDRKYDLRGTPIREEE.

4Fe-4S ferredoxin-type domains follow at residues 86-115 and 155-184; these read RAFKVFMDICVRCGACADKCHYYIGTGDPK and KEWYYYLLQCSLCRRCSLFCPYGIDTAEVV. [4Fe-4S] cluster-binding residues include cysteine 95, cysteine 98, cysteine 101, cysteine 105, cysteine 164, cysteine 167, cysteine 170, and cysteine 174.

It depends on [4Fe-4S] cluster as a cofactor.

The protein resides in the membrane. Functionally, has menaquinol-oxidizing activity. The HmeC and HmeD subunits may together mediate electron transfer from menaquinol to an unidentified electron acceptor on the cytoplasmic side of the membrane. This Archaeoglobus profundus (strain DSM 5631 / JCM 9629 / NBRC 100127 / Av18) protein is Hdr-like menaquinol oxidoreductase iron-sulfur subunit (hmeD).